The following is a 132-amino-acid chain: Protein C10 (132 aa).

Position 2 is an N-acetylalanine (Ala2).

The protein belongs to the UPF0456 family.

The protein localises to the cytoplasm. Functionally, in brain, may be required for corpus callosum development. This Bos taurus (Bovine) protein is Protein C10.